We begin with the raw amino-acid sequence, 263 residues long: Pyruvate formate-lyase-activating enzyme (263 aa).

One can recognise a Radical SAM core domain in the interval 23-260 (VDGPGIRFVV…TETYEEYKKR (238 aa)). [4Fe-4S] cluster contacts are provided by Cys-37, Cys-41, and Cys-44. S-adenosyl-L-methionine is bound by residues 43–45 (YCH), Gly-87, 142–144 (DIK), and His-215.

This sequence belongs to the organic radical-activating enzymes family. It depends on [4Fe-4S] cluster as a cofactor.

The protein localises to the cytoplasm. It catalyses the reaction glycyl-[formate C-acetyltransferase] + reduced [flavodoxin] + S-adenosyl-L-methionine = glycin-2-yl radical-[formate C-acetyltransferase] + semiquinone [flavodoxin] + 5'-deoxyadenosine + L-methionine + H(+). In terms of biological role, activation of pyruvate formate-lyase under anaerobic conditions by generation of an organic free radical, using S-adenosylmethionine and reduced flavodoxin as cosubstrates to produce 5'-deoxy-adenosine. The sequence is that of Pyruvate formate-lyase-activating enzyme (act) from Streptococcus mutans serotype c (strain ATCC 700610 / UA159).